The sequence spans 273 residues: Putative pyruvate, phosphate dikinase regulatory protein (273 aa).

An ADP-binding site is contributed by 153–160 (GVSRTSKT).

Belongs to the pyruvate, phosphate/water dikinase regulatory protein family. PDRP subfamily.

It carries out the reaction N(tele)-phospho-L-histidyl/L-threonyl-[pyruvate, phosphate dikinase] + ADP = N(tele)-phospho-L-histidyl/O-phospho-L-threonyl-[pyruvate, phosphate dikinase] + AMP + H(+). The enzyme catalyses N(tele)-phospho-L-histidyl/O-phospho-L-threonyl-[pyruvate, phosphate dikinase] + phosphate + H(+) = N(tele)-phospho-L-histidyl/L-threonyl-[pyruvate, phosphate dikinase] + diphosphate. Bifunctional serine/threonine kinase and phosphorylase involved in the regulation of the pyruvate, phosphate dikinase (PPDK) by catalyzing its phosphorylation/dephosphorylation. This Sinorhizobium fredii (strain NBRC 101917 / NGR234) protein is Putative pyruvate, phosphate dikinase regulatory protein.